The primary structure comprises 182 residues: Nucleoside-triphosphatase THEP1 (182 aa).

Residues 10–17 and 102–109 contribute to the ATP site; these read GRPGIGKT and VVVIDEIG.

The protein belongs to the THEP1 NTPase family.

It carries out the reaction a ribonucleoside 5'-triphosphate + H2O = a ribonucleoside 5'-diphosphate + phosphate + H(+). Functionally, has nucleotide phosphatase activity towards ATP, GTP, CTP, TTP and UTP. May hydrolyze nucleoside diphosphates with lower efficiency. This is Nucleoside-triphosphatase THEP1 from Thermofilum pendens (strain DSM 2475 / Hrk 5).